Here is a 161-residue protein sequence, read N- to C-terminus: Large ribosomal subunit protein uL30m (161 aa).

The transit peptide at 1 to 34 directs the protein to the mitochondrion; that stretch reads MAGILRLVVQRPPGGLQTVTKGVESLIGTDWIRH.

This sequence belongs to the universal ribosomal protein uL30 family. Component of the mitochondrial ribosome large subunit (39S) which comprises a 16S rRNA and about 50 distinct proteins.

It localises to the mitochondrion. In Macaca fascicularis (Crab-eating macaque), this protein is Large ribosomal subunit protein uL30m (MRPL30).